A 458-amino-acid chain; its full sequence is Methylenetetrahydrofolate--tRNA-(uracil-5-)-methyltransferase TrmFO (458 aa).

Residue Gly-12–Gly-17 participates in FAD binding.

The protein belongs to the MnmG family. TrmFO subfamily. FAD serves as cofactor.

It localises to the cytoplasm. The enzyme catalyses uridine(54) in tRNA + (6R)-5,10-methylene-5,6,7,8-tetrahydrofolate + NADH + H(+) = 5-methyluridine(54) in tRNA + (6S)-5,6,7,8-tetrahydrofolate + NAD(+). It catalyses the reaction uridine(54) in tRNA + (6R)-5,10-methylene-5,6,7,8-tetrahydrofolate + NADPH + H(+) = 5-methyluridine(54) in tRNA + (6S)-5,6,7,8-tetrahydrofolate + NADP(+). In terms of biological role, catalyzes the folate-dependent formation of 5-methyl-uridine at position 54 (M-5-U54) in all tRNAs. This Deinococcus geothermalis (strain DSM 11300 / CIP 105573 / AG-3a) protein is Methylenetetrahydrofolate--tRNA-(uracil-5-)-methyltransferase TrmFO.